Consider the following 81-residue polypeptide: Apolipoprotein C-I, acidic form (81 aa).

Residues 1–24 form the signal peptide; sequence MRLFLSLLVVVLSMVLKGPTPAQG.

It belongs to the apolipoprotein C1 family.

The protein localises to the secreted. This chain is Apolipoprotein C-I, acidic form (APOC1A), found in Macaca fascicularis (Crab-eating macaque).